Reading from the N-terminus, the 902-residue chain is Translation initiation factor IF-2 (902 aa).

Basic and acidic residues predominate over residues 137-177; it reads NLDEQQRLAESDRARDEAIQRKRDEEQAAKDRVEAERKAAE. Disordered regions lie at residues 137-248 and 266-314; these read NLDE…SHVM and HLSA…ERPT. 2 stretches are compositionally biased toward low complexity: residues 178–229 and 279–291; these read EAAA…ATPA and RGKPTGRPGSSSS. One can recognise a tr-type G domain in the interval 401-570; sequence SRPPVVTIMG…SLQAEVLELK (170 aa). The interval 410-417 is G1; it reads GHVDHGKT. 410–417 lines the GTP pocket; it reads GHVDHGKT. A G2 region spans residues 435–439; it reads GITQH. The segment at 456-459 is G3; that stretch reads DTPG. Residues 456–460 and 510–513 contribute to the GTP site; these read DTPGH and NKID. The G4 stretch occupies residues 510–513; sequence NKID. A G5 region spans residues 546 to 548; that stretch reads SAK.

Belongs to the TRAFAC class translation factor GTPase superfamily. Classic translation factor GTPase family. IF-2 subfamily.

Its subcellular location is the cytoplasm. Its function is as follows. One of the essential components for the initiation of protein synthesis. Protects formylmethionyl-tRNA from spontaneous hydrolysis and promotes its binding to the 30S ribosomal subunits. Also involved in the hydrolysis of GTP during the formation of the 70S ribosomal complex. This Xanthomonas campestris pv. campestris (strain 8004) protein is Translation initiation factor IF-2.